The chain runs to 256 residues: Thiazole synthase (256 aa).

Lys-98 functions as the Schiff-base intermediate with DXP in the catalytic mechanism. Residues Gly-159, 185–186, and 207–208 contribute to the 1-deoxy-D-xylulose 5-phosphate site; these read AG and NT.

Belongs to the ThiG family. Homotetramer. Forms heterodimers with either ThiH or ThiS.

Its subcellular location is the cytoplasm. The enzyme catalyses [ThiS sulfur-carrier protein]-C-terminal-Gly-aminoethanethioate + 2-iminoacetate + 1-deoxy-D-xylulose 5-phosphate = [ThiS sulfur-carrier protein]-C-terminal Gly-Gly + 2-[(2R,5Z)-2-carboxy-4-methylthiazol-5(2H)-ylidene]ethyl phosphate + 2 H2O + H(+). Its pathway is cofactor biosynthesis; thiamine diphosphate biosynthesis. Its function is as follows. Catalyzes the rearrangement of 1-deoxy-D-xylulose 5-phosphate (DXP) to produce the thiazole phosphate moiety of thiamine. Sulfur is provided by the thiocarboxylate moiety of the carrier protein ThiS. In vitro, sulfur can be provided by H(2)S. The protein is Thiazole synthase of Aliivibrio fischeri (strain MJ11) (Vibrio fischeri).